The following is a 438-amino-acid chain: Gamma-glutamyl phosphate reductase (438 aa).

It belongs to the gamma-glutamyl phosphate reductase family.

It localises to the cytoplasm. It carries out the reaction L-glutamate 5-semialdehyde + phosphate + NADP(+) = L-glutamyl 5-phosphate + NADPH + H(+). Its pathway is amino-acid biosynthesis; L-proline biosynthesis; L-glutamate 5-semialdehyde from L-glutamate: step 2/2. In terms of biological role, catalyzes the NADPH-dependent reduction of L-glutamate 5-phosphate into L-glutamate 5-semialdehyde and phosphate. The product spontaneously undergoes cyclization to form 1-pyrroline-5-carboxylate. The sequence is that of Gamma-glutamyl phosphate reductase from Prochlorococcus marinus (strain NATL2A).